The sequence spans 211 residues: Ribonuclease P protein component 3 (211 aa).

This sequence belongs to the eukaryotic/archaeal RNase P protein component 3 family. As to quaternary structure, consists of a catalytic RNA component and at least 4-5 protein subunits.

The protein resides in the cytoplasm. It catalyses the reaction Endonucleolytic cleavage of RNA, removing 5'-extranucleotides from tRNA precursor.. In terms of biological role, part of ribonuclease P, a protein complex that generates mature tRNA molecules by cleaving their 5'-ends. This Aeropyrum pernix (strain ATCC 700893 / DSM 11879 / JCM 9820 / NBRC 100138 / K1) protein is Ribonuclease P protein component 3.